The sequence spans 122 residues: MIQPQTRLKVADNTGAKEIMCIRVLGGSRVRYGRVGDIIVASVKVATPGGQVKKGDVVKAVIIRTAKEYGRPDGSHIRFDDNAAVLIGKENNPRGTRIFGPVARELREKQFMRIVSLAPEVL.

The protein belongs to the universal ribosomal protein uL14 family. In terms of assembly, part of the 50S ribosomal subunit. Forms a cluster with proteins L3 and L19. In the 70S ribosome, L14 and L19 interact and together make contacts with the 16S rRNA in bridges B5 and B8.

In terms of biological role, binds to 23S rRNA. Forms part of two intersubunit bridges in the 70S ribosome. This chain is Large ribosomal subunit protein uL14, found in Chloroflexus aurantiacus (strain ATCC 29366 / DSM 635 / J-10-fl).